The primary structure comprises 600 residues: Cationic amino acid transporter 4, vacuolar (600 aa).

The Cytoplasmic portion of the chain corresponds to 1–32 (MNSLVRRKQVDSVHLIKNDGPHQLAKKLSAVD). Residues 33–53 (LVAIGVGTTIGAGVYILVGTV) traverse the membrane as a helical segment. The Vacuolar segment spans residues 54–60 (AREHTGP). A helical membrane pass occupies residues 61–81 (ALAVSFFIAGVAAALSACCYA). The Cytoplasmic segment spans residues 82–92 (ELASRCPSAGS). A helical membrane pass occupies residues 93-115 (AYHYAYICLGEGIAWLVGWALVL). Topologically, residues 116-152 (DYTIGGSAIARGITPNLASFFGGLDNLPVFLARQTIP) are vacuolar. A helical membrane pass occupies residues 153-173 (GVGIVVDPCAALLIMIVTILL). Residues 174-184 (CFGIKESSTVQ) lie on the Cytoplasmic side of the membrane. Residues 185 to 205 (AIVTSVNVCTLVFIIVVGGYL) form a helical membrane-spanning segment. The Vacuolar portion of the chain corresponds to 206–220 (ACKTGWVGYDLPSGY). The helical transmembrane segment at 221–241 (FPFGLNGILAGSAVVFFSYIG) threads the bilayer. Residues 242-264 (FDTVTSTAEEVKNPQRDLPLGIG) lie on the Cytoplasmic side of the membrane. A helical membrane pass occupies residues 265–285 (IALLICCILYMLLSVVIVGLV). The Vacuolar portion of the chain corresponds to 286 to 308 (PYYSLNPDTPISSAFGDSGMQWA). Residues 309-329 (AYILTTGAITALCASLLGSLL) form a helical membrane-spanning segment. At 330-360 (AQPRIFMAMARDGLLPAFFSEISPRTQVPVK) the chain is on the cytoplasmic side. The helical transmembrane segment at 361 to 381 (STIAIGVLAAALAFFMDVAQL) threads the bilayer. Ser-382 is a topological domain (vacuolar). A helical membrane pass occupies residues 383-403 (EMVSVGTLMAFTAVAVCVLVL). Topologically, residues 404-462 (RYVPPDGVPLSSSSQTLSDTDESRAETENFLVDAIESSDSPLLGNETARDEKYFGKRRK) are cytoplasmic. Residues 463-483 (IAAWSIALVCIGVLGLASAAS) traverse the membrane as a helical segment. The Vacuolar segment spans residues 484–492 (AERLPSFPR). A helical transmembrane segment spans residues 493–513 (FTICGVSAVILLGSLITLGYI). The Cytoplasmic segment spans residues 514-528 (DEDEERHNFGHKGGF). Residues 529–549 (LCPFVPYLPVLCILINTYLII) form a helical membrane-spanning segment. A topological domain (vacuolar) is located at residue Asn-550. The chain crosses the membrane as a helical span at residues 551-571 (IGAGTWIRVLIWLLIGSMIYI). The Cytoplasmic portion of the chain corresponds to 572–600 (FYGRSHSLLNNAVYVPTMTCTRKTTDHLA).

The protein belongs to the amino acid-polyamine-organocation (APC) superfamily. Cationic amino acid transporter (CAT) (TC 2.A.3.3) family. In terms of tissue distribution, expressed in roots, stems, flowers, and leaves.

The protein localises to the vacuole membrane. In terms of biological role, permease involved in the transport of the cationic amino acids. The polypeptide is Cationic amino acid transporter 4, vacuolar (CAT4) (Arabidopsis thaliana (Mouse-ear cress)).